The following is a 406-amino-acid chain: MTEHLPMPQFGPLAGVRVVFSGIEIAGPFAGQMFAEWGAEVIWIENVAWADTIRVQPHYPQLSRRNLHALSLNIFKEEGRDAFLKLMETTDIFIEASKGPAFARRGITDEVLWEHNPKLVIAHLSGFGQYGDPQYTNLPAYNTIAQAFSGYLIQNGDKDQPMPAFPYTADYFSGMTATTSALAALYKVQQTGKGESIDIAMYEVMLRMGQYFMMDYFNGGEICPRMTKGKDPYYAGCGLYRCQDGYIVMEVVGITQIEEIFKDIGLAHLLGTPEVPKGTQLIHRINCPHGQLFEDKLDEWLANQPITAVLKRLSELNIASAKVLTIPELEGNPQYVARESITQWKTMSGETCKGPNIMPKFKNNPGKIWRGMPAHGMDTNAILKNIGYSDEQIRELVDKGLAKIVE.

2 residues coordinate CoA: Lys98 and Arg105. Asp170 serves as the catalytic Nucleophile.

Belongs to the CoA-transferase III family. CaiB subfamily. As to quaternary structure, homodimer.

The protein resides in the cytoplasm. It catalyses the reaction crotonobetainyl-CoA + (R)-carnitine = crotonobetaine + (R)-carnitinyl-CoA. The catalysed reaction is 4-(trimethylamino)butanoyl-CoA + (R)-carnitine = (R)-carnitinyl-CoA + 4-(trimethylamino)butanoate. It participates in amine and polyamine metabolism; carnitine metabolism. Its function is as follows. Catalyzes the reversible transfer of the CoA moiety from gamma-butyrobetainyl-CoA to L-carnitine to generate L-carnitinyl-CoA and gamma-butyrobetaine. Is also able to catalyze the reversible transfer of the CoA moiety from gamma-butyrobetainyl-CoA or L-carnitinyl-CoA to crotonobetaine to generate crotonobetainyl-CoA. In Proteus mirabilis (strain HI4320), this protein is L-carnitine CoA-transferase.